Consider the following 268-residue polypeptide: Tryptophan synthase alpha chain (268 aa).

Residues Glu-49 and Asp-60 each act as proton acceptor in the active site.

It belongs to the TrpA family. In terms of assembly, tetramer of two alpha and two beta chains.

The catalysed reaction is (1S,2R)-1-C-(indol-3-yl)glycerol 3-phosphate + L-serine = D-glyceraldehyde 3-phosphate + L-tryptophan + H2O. It participates in amino-acid biosynthesis; L-tryptophan biosynthesis; L-tryptophan from chorismate: step 5/5. The alpha subunit is responsible for the aldol cleavage of indoleglycerol phosphate to indole and glyceraldehyde 3-phosphate. This chain is Tryptophan synthase alpha chain, found in Escherichia coli (strain 55989 / EAEC).